The sequence spans 287 residues: Ribosomal RNA small subunit methyltransferase A (287 aa).

Residues N35, V37, G62, E83, D113, and N131 each contribute to the S-adenosyl-L-methionine site.

Belongs to the class I-like SAM-binding methyltransferase superfamily. rRNA adenine N(6)-methyltransferase family. RsmA subfamily.

The protein resides in the cytoplasm. The enzyme catalyses adenosine(1518)/adenosine(1519) in 16S rRNA + 4 S-adenosyl-L-methionine = N(6)-dimethyladenosine(1518)/N(6)-dimethyladenosine(1519) in 16S rRNA + 4 S-adenosyl-L-homocysteine + 4 H(+). In terms of biological role, specifically dimethylates two adjacent adenosines (A1518 and A1519) in the loop of a conserved hairpin near the 3'-end of 16S rRNA in the 30S particle. May play a critical role in biogenesis of 30S subunits. The polypeptide is Ribosomal RNA small subunit methyltransferase A (Thermobifida fusca (strain YX)).